The sequence spans 215 residues: Probable Rab-related GTPase (215 aa).

Position 20–27 (G20–S27) interacts with GTP. An Effector region motif is present at residues V42 to F50. GTP contacts are provided by residues D69–Q73 and N127–D130. 2 S-geranylgeranyl cysteine; by host lipidation sites follow: C211 and C212. C212 bears the Cysteine methyl ester; by host mark. Residues Y213 to S215 constitute a propeptide, removed in mature form.

The protein belongs to the small GTPase superfamily. Rab family.

It localises to the host cell membrane. In terms of biological role, may be involved in protein transport. The chain is Probable Rab-related GTPase from Acanthamoeba polyphaga mimivirus (APMV).